Here is a 510-residue protein sequence, read N- to C-terminus: MQEPREQTLSQVNNPDASDEKPETSSLASNLSMSEEIMTCTDYIPRSSNDYTSQMYSAKPYAHILSVPVSETTYPGQTQYQTLQQSQPYAVYPQATQTYGLPPFASSTNASLIPTSSAIANIPAAAVASISNQDYPTYTILGQNQYQACYPSSSFGVTGQTNSDAETTTLAATTYQTEKPSAMVPAPATQRLPSDSSASPPLSQTTPNKDADDQARKNMTVKNRGKRKADASSSQDSELERVFLWDLDETIIIFHSLLTGSYAQKYGKDPTVVIGSGLTMEEMIFEVADTHLFFNDLEECDQVHVEDVASDDNGQDLSNYSFSTDGFSGSGGSGSHGSSVGVQGGVDWMRKLAFRYRKVREIYDKHKSNVGGLLSPQRKEALQRLRAEIEVLTDSWLGTALKSLLLIQSRKNCANVLITTTQLVPALAKVLLYGLGEIFPIENIYSATKIGKESCFERIVSRFGKKVTYVVIGDGRDEEIAAKQHNMPFWRITNHGDLVSLHQALELDFL.

Disordered stretches follow at residues 1-32 and 175-233; these read MQEPREQTLSQVNNPDASDEKPETSSLASNLS and YQTE…DASS. Polar residues predominate over residues 7-16; sequence QTLSQVNNPD. Positions 192-203 are enriched in low complexity; it reads LPSDSSASPPLS. Phosphoserine is present on residues S199 and S203. The Nucleophile role is filled by D246. Positions 246 and 248 each coordinate Mg(2+). Residue D248 is the Proton donor of the active site. A phosphoserine mark is found at S375 and S409. Mg(2+) is bound at residue D474.

This sequence belongs to the HAD-like hydrolase superfamily. EYA family. As to quaternary structure, interacts with SIX1 and DACH1, and probably SIX2, SIX4 and SIX5. Mg(2+) serves as cofactor. Ser-203 phosphorylation is required for localization at sites of DNA damage and directing interaction with H2AX. As to expression, expressed in branchial arches, CNS and developing eye.

It localises to the cytoplasm. It is found in the nucleus. It catalyses the reaction O-phospho-L-tyrosyl-[protein] + H2O = L-tyrosyl-[protein] + phosphate. Functionally, tyrosine phosphatase that specifically dephosphorylates 'Tyr-142' of histone H2AX (H2AXY142ph). 'Tyr-142' phosphorylation of histone H2AX plays a central role in DNA repair and acts as a mark that distinguishes between apoptotic and repair responses to genotoxic stress. Promotes efficient DNA repair by dephosphorylating H2AX, promoting the recruitment of DNA repair complexes containing MDC1. Its function as histone phosphatase probably explains its role in transcription regulation during organogenesis. The phosphatase activity has been shown in vitro. Coactivates SIX1. Seems to coactivate SIX2, SIX4 and SIX5. The repression of precursor cell proliferation in myoblasts by SIX1 is switched to activation through recruitment of EYA3 to the SIX1-DACH1 complex and seems to be dependent on EYA3 phosphatase activity. May be involved in development of the eye. May play a role in mediating the induction and differentiation of cranial placodes. The sequence is that of Protein phosphatase EYA3 (Eya3) from Mus musculus (Mouse).